The chain runs to 813 residues: Sorting nexin-29 (813 aa).

In terms of domain architecture, RUN spans 36-180 (SDSDSRVTCL…ILFAINIDNK (145 aa)). A phosphoserine mark is found at S268, S291, S292, S330, and S344. Residues 269–299 (FDDEEDEQNSGDVFKKTPGAGESSEDNSDRS) are disordered. Acidic residues predominate over residues 346 to 357 (DDEDVDENEDDV). The interval 346-378 (DDEDVDENEDDVYGNSSGRKHRGHSESPEKPLE) is disordered. Phosphoserine is present on residues S445 and S450. Residues 466–545 (TISELRQATV…VLKVQLKKYV (80 aa)) are a coiled coil. S639 carries the post-translational modification Phosphoserine. Position 641 is a phosphothreonine (T641). Residues S642 and S646 each carry the phosphoserine modification. The 124-residue stretch at 656-779 (ALINVWIPSV…PFFVDITPPG (124 aa)) folds into the PX domain. The interval 778–813 (PGEPVNSRPKAASRFPKLSRGQPRETRNVEPQSGDL) is disordered.

It belongs to the sorting nexin family.

This Homo sapiens (Human) protein is Sorting nexin-29 (SNX29).